A 443-amino-acid chain; its full sequence is Transcriptional adapter 2-alpha (443 aa).

Phosphoserine is present on S6. The segment at 12-69 (SDKPPCRGCSSYLMEPYIKCAECGPPPFFLCLQCFTRGFEYKKHQSDHTYEIMTSDFP) adopts a ZZ-type zinc-finger fold. 8 residues coordinate Zn(2+): C17, C20, C31, C34, C42, C45, H55, and H59. The region spanning 70–122 (VLDPSWTAQEEMALLEAVMDCGFGNWQDVANQMCTKTKEECEKHYMKHFINNP) is the SANT domain. Residues K132 and K138 each participate in a glycyl lysine isopeptide (Lys-Gly) (interchain with G-Cter in SUMO2) cross-link. In terms of domain architecture, SWIRM spans 356–443 (NSGRRSAPPL…LIREGYITKA (88 aa)). Residues 426–435 (KTRKIYDFLI) mediate DNA binding.

In terms of assembly, interacts with GCN5 and NR3C1. Associated with the P/CAF protein in the PCAF complex. Component of the PCAF complex, at least composed of TADA2L/ADA2, TADA3L/ADA3, TAF5L/PAF65-beta, TAF6L/PAF65-alpha, TAF10/TAFII30, TAF12/TAFII20, TAF9/TAFII31 and TRRAP. Component of the ADA2A-containing complex (ATAC), composed of KAT14, KAT2A, TADA2L, TADA3L, ZZ3, MBIP, WDR5, YEATS2, CCDC101 and DR1. Interacts with CCDC134.

It localises to the nucleus. Its subcellular location is the chromosome. Its function is as follows. Component of the ATAC complex, a complex with histone acetyltransferase activity on histones H3 and H4. Required for the function of some acidic activation domains, which activate transcription from a distant site. Binds double-stranded DNA. Binds dinucleosomes, probably at the linker region between neighboring nucleosomes. Plays a role in chromatin remodeling. May promote TP53/p53 'Lys-321' acetylation, leading to reduced TP53 stability and transcriptional activity. May also promote XRCC6 acetylation thus facilitating cell apoptosis in response to DNA damage. The protein is Transcriptional adapter 2-alpha (Tada2a) of Rattus norvegicus (Rat).